The chain runs to 193 residues: Protein TEX261 (193 aa).

The next 5 helical transmembrane spans lie at 1-21, 39-59, 67-87, 94-114, and 122-142; these read MVGVTLANVLPVCLALLPPPA, SRIIKYMIWFSTAVLIGLYVF, IGVGLFTNLVYFGLLQTFPFI, FILSCGLVVVNHYLAFQFFAE, and VLAYFTFCLWIIPFAFFVSLS.

The protein belongs to the SVP26 family.

Its subcellular location is the membrane. In Bos taurus (Bovine), this protein is Protein TEX261 (TEX261).